A 256-amino-acid polypeptide reads, in one-letter code: Tryptophan synthase alpha chain (256 aa).

Residues Glu48 and Asp59 each act as proton acceptor in the active site.

Belongs to the TrpA family. As to quaternary structure, tetramer of two alpha and two beta chains.

The catalysed reaction is (1S,2R)-1-C-(indol-3-yl)glycerol 3-phosphate + L-serine = D-glyceraldehyde 3-phosphate + L-tryptophan + H2O. It functions in the pathway amino-acid biosynthesis; L-tryptophan biosynthesis; L-tryptophan from chorismate: step 5/5. Its function is as follows. The alpha subunit is responsible for the aldol cleavage of indoleglycerol phosphate to indole and glyceraldehyde 3-phosphate. The chain is Tryptophan synthase alpha chain from Caldicellulosiruptor bescii (strain ATCC BAA-1888 / DSM 6725 / KCTC 15123 / Z-1320) (Anaerocellum thermophilum).